Consider the following 160-residue polypeptide: Ribonuclease P protein component 2 (160 aa).

Belongs to the eukaryotic/archaeal RNase P protein component 2 family. As to quaternary structure, consists of a catalytic RNA component and at least 4-5 protein subunits.

Its subcellular location is the cytoplasm. It carries out the reaction Endonucleolytic cleavage of RNA, removing 5'-extranucleotides from tRNA precursor.. Functionally, part of ribonuclease P, a protein complex that generates mature tRNA molecules by cleaving their 5'-ends. This Methanoculleus marisnigri (strain ATCC 35101 / DSM 1498 / JR1) protein is Ribonuclease P protein component 2.